A 1189-amino-acid polypeptide reads, in one-letter code: Lysine-specific demethylase hairless (1189 aa).

Disordered regions lie at residues 1-40, 236-257, 349-377, 414-480, and 505-552; these read MEST…HHGP, HLQR…EMGA, EGGA…SHHT, AGSP…LQDP, and GEGG…RLST. Over residues 239–254 the composition is skewed to basic and acidic residues; the sequence is RAGEAERPSLHQRDGE. A compositionally biased stretch (basic and acidic residues) spans 457-469; that stretch reads KDVDSGQHDEQKG. Residues 566–570 carry the LXXLL motif 1 motif; the sequence is LCRLL. The C6-type zinc finger occupies 600–625; sequence CSRCHHGLFNTHWRCPRCSHRLCVAC. The segment at 702-750 is disordered; the sequence is GDAGQQKESTQKTPPTPQPSCNGDTHRTKSIKEETPDSAETPAEDRAGR. Over residues 725 to 736 the composition is skewed to basic and acidic residues; sequence DTHRTKSIKEET. Positions 758–762 match the LXXLL motif 2 motif; the sequence is LCELL. The JmjC domain maps to 946–1157; that stretch reads DTSRVENLAA…LSAQLCHQGP (212 aa). Fe cation contacts are provided by Cys-1007, Glu-1009, and His-1125.

Fe(2+) is required as a cofactor. Strongest expression of isoforms 1 and 2 is seen in the small intestine, weaker expression in brain and colon, and trace expression is found in liver, pancreas, spleen, thymus, stomach, salivary gland, appendix and trachea. Isoform 1 is always the most abundant. Isoform 1 is exclusively expressed at low levels in kidney and testis. Isoform 2 is exclusively expressed at high levels in the skin.

It is found in the nucleus. It carries out the reaction N(6),N(6)-dimethyl-L-lysyl(9)-[histone H3] + 2 2-oxoglutarate + 2 O2 = L-lysyl(9)-[histone H3] + 2 formaldehyde + 2 succinate + 2 CO2. In terms of biological role, histone demethylase that specifically demethylates both mono- and dimethylated 'Lys-9' of histone H3. May act as a transcription regulator controlling hair biology (via targeting of collagens), neural activity, and cell cycle. In Homo sapiens (Human), this protein is Lysine-specific demethylase hairless (HR).